Here is a 204-residue protein sequence, read N- to C-terminus: Acyl-homoserine-lactone synthase (204 aa).

It belongs to the autoinducer synthase family.

It carries out the reaction a fatty acyl-[ACP] + S-adenosyl-L-methionine = an N-acyl-L-homoserine lactone + S-methyl-5'-thioadenosine + holo-[ACP] + H(+). Functionally, required for the synthesis of acyl-HSL autoinducers that bind to SolR. The chain is Acyl-homoserine-lactone synthase (solI) from Ralstonia nicotianae (strain ATCC BAA-1114 / GMI1000) (Ralstonia solanacearum).